The following is a 461-amino-acid chain: Diacylglycerol O-acyltransferase 1 (461 aa).

Residues 1 to 38 (MQDSMDDSLREAEGRQDDSEVSSGTTLGSSTPEDSGVT) are disordered. Over 1 to 112 (MQDSMDDSLR…TLVVAWHTSS (112 aa)) the chain is Cytoplasmic. Over residues 7 to 18 (DSLREAEGRQDD) the composition is skewed to basic and acidic residues. Polar residues predominate over residues 21–33 (VSSGTTLGSSTPE). Residues 113–133 (FIYMTVLVLFLAANPLMWWFM) traverse the membrane as a helical segment. Topologically, residues 134 to 230 (VPYMVYYVWN…ARPQVATGPR (97 aa)) are lumenal. A helical transmembrane segment spans residues 231-251 (YIFGYHPHGVGALGAFGAIAT). The Cytoplasmic portion of the chain corresponds to 252–258 (EGCNWSK). A helical transmembrane segment spans residues 259-279 (VFAGIPACLCTLVNQFQIPIY). At 280 to 332 (RDYLLGLGCTSVARKNVLKVLEQNYSVCIVVGGAQEALLSRVGSTELVLNKRK) the chain is on the lumenal side. The chain crosses the membrane as a helical span at residues 333-353 (GFIKLALETGNVNLVPIYAFG). Residues 354 to 461 (ETDCFNVLDT…YAGKELKIVE (108 aa)) are Cytoplasmic-facing.

The protein belongs to the diacylglycerol acyltransferase family.

It is found in the lipid droplet. It localises to the endoplasmic reticulum membrane. It catalyses the reaction an acyl-CoA + a 1,2-diacyl-sn-glycerol = a triacyl-sn-glycerol + CoA. The enzyme catalyses a 2-acylglycerol + an acyl-CoA = a 1,2-diacyl-sn-glycerol + CoA. The protein operates within glycerolipid metabolism; triacylglycerol biosynthesis. Catalyzes the terminal and only committed step in triacylglycerol (TAG) synthesis by using diacylglycerol (DAG) and fatty acyl-CoA as substrates. Required for storage lipid synthesis. Major DAG esterifying enzyme in stationary phase when TAG production is particularly active. Involved in lipid particle synthesis from the endoplasmic reticulum, promoting localized TAG production at discrete ER subdomains. In Eremothecium gossypii (strain ATCC 10895 / CBS 109.51 / FGSC 9923 / NRRL Y-1056) (Yeast), this protein is Diacylglycerol O-acyltransferase 1 (DGA1).